Here is a 475-residue protein sequence, read N- to C-terminus: Ribulose bisphosphate carboxylase large chain (475 aa).

The propeptide occupies 1 to 2; sequence MS. Position 3 is an N-acetylproline (Pro3). At Lys14 the chain carries N6,N6,N6-trimethyllysine. Substrate contacts are provided by Asn123 and Thr173. Residue Lys175 is the Proton acceptor of the active site. Lys177 is a binding site for substrate. Lys201, Asp203, and Glu204 together coordinate Mg(2+). Lys201 is subject to N6-carboxylysine. The Proton acceptor role is filled by His294. Arg295, His327, and Ser379 together coordinate substrate.

The protein belongs to the RuBisCO large chain family. Type I subfamily. In terms of assembly, heterohexadecamer of 8 large chains and 8 small chains; disulfide-linked. The disulfide link is formed within the large subunit homodimers. Mg(2+) is required as a cofactor. In terms of processing, the disulfide bond which can form in the large chain dimeric partners within the hexadecamer appears to be associated with oxidative stress and protein turnover.

Its subcellular location is the plastid. The protein resides in the chloroplast. It catalyses the reaction 2 (2R)-3-phosphoglycerate + 2 H(+) = D-ribulose 1,5-bisphosphate + CO2 + H2O. The catalysed reaction is D-ribulose 1,5-bisphosphate + O2 = 2-phosphoglycolate + (2R)-3-phosphoglycerate + 2 H(+). Functionally, ruBisCO catalyzes two reactions: the carboxylation of D-ribulose 1,5-bisphosphate, the primary event in carbon dioxide fixation, as well as the oxidative fragmentation of the pentose substrate in the photorespiration process. Both reactions occur simultaneously and in competition at the same active site. The polypeptide is Ribulose bisphosphate carboxylase large chain (Pinus thunbergii (Japanese black pine)).